The chain runs to 103 residues: Large ribosomal subunit protein bL21 (103 aa).

This sequence belongs to the bacterial ribosomal protein bL21 family. In terms of assembly, part of the 50S ribosomal subunit. Contacts protein L20.

This protein binds to 23S rRNA in the presence of protein L20. This Pseudomonas aeruginosa (strain LESB58) protein is Large ribosomal subunit protein bL21.